A 159-amino-acid chain; its full sequence is Ribosomal RNA large subunit methyltransferase H (159 aa).

S-adenosyl-L-methionine is bound by residues Leu-76, Gly-108, and 127–132 (FGLLTL).

The protein belongs to the RNA methyltransferase RlmH family. As to quaternary structure, homodimer.

The protein resides in the cytoplasm. It catalyses the reaction pseudouridine(1915) in 23S rRNA + S-adenosyl-L-methionine = N(3)-methylpseudouridine(1915) in 23S rRNA + S-adenosyl-L-homocysteine + H(+). Functionally, specifically methylates the pseudouridine at position 1915 (m3Psi1915) in 23S rRNA. This Streptococcus pyogenes serotype M6 (strain ATCC BAA-946 / MGAS10394) protein is Ribosomal RNA large subunit methyltransferase H.